The sequence spans 403 residues: Tryptophan synthase beta chain (403 aa).

Lysine 93 bears the N6-(pyridoxal phosphate)lysine mark.

This sequence belongs to the TrpB family. In terms of assembly, tetramer of two alpha and two beta chains. It depends on pyridoxal 5'-phosphate as a cofactor.

The catalysed reaction is (1S,2R)-1-C-(indol-3-yl)glycerol 3-phosphate + L-serine = D-glyceraldehyde 3-phosphate + L-tryptophan + H2O. It participates in amino-acid biosynthesis; L-tryptophan biosynthesis; L-tryptophan from chorismate: step 5/5. In terms of biological role, the beta subunit is responsible for the synthesis of L-tryptophan from indole and L-serine. The sequence is that of Tryptophan synthase beta chain from Acinetobacter baylyi (strain ATCC 33305 / BD413 / ADP1).